The sequence spans 190 residues: Hypoxanthine/guanine phosphoribosyltransferase (190 aa).

The protein belongs to the purine/pyrimidine phosphoribosyltransferase family. Archaeal HPRT subfamily. Homodimer.

Its subcellular location is the cytoplasm. The catalysed reaction is IMP + diphosphate = hypoxanthine + 5-phospho-alpha-D-ribose 1-diphosphate. The enzyme catalyses GMP + diphosphate = guanine + 5-phospho-alpha-D-ribose 1-diphosphate. It participates in purine metabolism; IMP biosynthesis via salvage pathway; IMP from hypoxanthine: step 1/1. Its function is as follows. Catalyzes a salvage reaction resulting in the formation of IMP that is energically less costly than de novo synthesis. In Methanosalsum zhilinae (strain DSM 4017 / NBRC 107636 / OCM 62 / WeN5) (Methanohalophilus zhilinae), this protein is Hypoxanthine/guanine phosphoribosyltransferase.